Consider the following 594-residue polypeptide: MADLLSSLKNLSSSSGVYQYFDKNRQLLYIGKAKNLKKRIKSYFSVRNNEITPNPRTSLRVQMMVKQIAFLETILVENEQDALILENSLIKQLKPKYNILLRDDKTYPYIYMDFSIDFPIPLITRKILKQPGVKYFGPFTSGAKDILDSLYELLPLVQKKNCIKDKKACMFYQIERCKAPCEDKITKEEYLKIAKECLEMIENKDRLIKELELKMERLSSNLRFEEALIYRDRIAKIQKIAPFTCMDLAKLYDLDIFAFYGGNNKAVLVKMFMRGGKIISSAFEKIHSLNGFDTDEAMKQAIINHYQSHLPLMPEQILLSACSNETLKELQEFISHQYSKKIALSIPKKGDKLALIEIAMKNAQEIFSQEKTSNEDRILEEARSLFNLECVPYRVEIFDTSHHSNSQCVGGMVVYENNAFQKDSYRRYHLKGSNEYDQMSELLTRRALDFAKEPPPNLWVIDGGRAQLNIALEILKSSGSFVEVIAISKEKRDSKAYRSKGGAKDIIHTISHTFKLLPSDKRLQWVQKLRDESHRYAINFHRSTKLKNMKQIALLKEKGIGEASVKKLLDYFGSFEAIEKASDQEKNAVLKKRK.

The GIY-YIG domain occupies 13–99 (SSSGVYQYFD…IKQLKPKYNI (87 aa)). The UVR domain occupies 205–240 (DRLIKELELKMERLSSNLRFEEALIYRDRIAKIQKI).

The protein belongs to the UvrC family. As to quaternary structure, interacts with UvrB in an incision complex.

The protein localises to the cytoplasm. The UvrABC repair system catalyzes the recognition and processing of DNA lesions. UvrC both incises the 5' and 3' sides of the lesion. The N-terminal half is responsible for the 3' incision and the C-terminal half is responsible for the 5' incision. The protein is UvrABC system protein C of Helicobacter pylori (strain J99 / ATCC 700824) (Campylobacter pylori J99).